We begin with the raw amino-acid sequence, 292 residues long: Ventral anterior homeobox 2 (292 aa).

The span at Met1 to Ala36 shows a compositional bias: basic and acidic residues. Residues Met1–Asp74 are disordered. The homeobox DNA-binding region spans Pro102 to Gln161. The interval Leu207–Pro242 is disordered.

It belongs to the EMX homeobox family. Expressed in the developing and mature retina.

It localises to the nucleus. In terms of biological role, transcription factor that may function in dorsoventral specification of the forebrain. Regulates the expression of Wnt signaling antagonists including the expression of a truncated TCF7L2 isoform that cannot bind CTNNB1 and acts therefore as a potent dominant-negative Wnt antagonist. Plays a crucial role in eye development and, in particular, in the specification of the ventral optic vesicle. May be a regulator of axial polarization in the retina. This is Ventral anterior homeobox 2 (Vax2) from Mus musculus (Mouse).